Here is a 305-residue protein sequence, read N- to C-terminus: MKTVLELKNVTKNIRGRTIIDDLSFTIREGEVFGFLGPNGAGKTTTIRMMVGLMKLSKGDVLICGQSITKEYAKAIKHIGAIVENPELYKFLSGYKNLQQFARMVKGVTKEKIDEVVELVGLTDRIHDKVKTYSLGMRQRLGLAQCLLHDPKVLILDEPTNGLDPAGIREIRDHLKKLTRERGMAVIVSSHLLSEMELMCDRIAILQKGKLIDIQNVKDENIDENDTYFFQVEQPSEAATVLNQYDLLSKTNGVEIKLAKEEVPAVIELLVMQQIRIYEVKVITKSLEDRFLEMTGETKEEVQHA.

Positions 5-233 (LELKNVTKNI…ENDTYFFQVE (229 aa)) constitute an ABC transporter domain. 37 to 44 (GPNGAGKT) contributes to the ATP binding site.

This sequence belongs to the ABC transporter superfamily.

This is an uncharacterized protein from Bacillus subtilis (strain 168).